A 911-amino-acid chain; its full sequence is Protein translocase subunit SecA (911 aa).

ATP is bound by residues glutamine 87, 105–109 (GEGKT), and aspartate 510. The Zn(2+) site is built by cysteine 896, cysteine 898, cysteine 907, and histidine 908.

It belongs to the SecA family. Monomer and homodimer. Part of the essential Sec protein translocation apparatus which comprises SecA, SecYEG and auxiliary proteins SecDF-YajC and YidC. Zn(2+) is required as a cofactor.

Its subcellular location is the cell inner membrane. The protein localises to the cytoplasm. It carries out the reaction ATP + H2O + cellular proteinSide 1 = ADP + phosphate + cellular proteinSide 2.. Part of the Sec protein translocase complex. Interacts with the SecYEG preprotein conducting channel. Has a central role in coupling the hydrolysis of ATP to the transfer of proteins into and across the cell membrane, serving both as a receptor for the preprotein-SecB complex and as an ATP-driven molecular motor driving the stepwise translocation of polypeptide chains across the membrane. This chain is Protein translocase subunit SecA, found in Acinetobacter baumannii (strain SDF).